The following is a 379-amino-acid chain: Homoserine O-succinyltransferase (379 aa).

The 310-residue stretch at 51–360 (NAVLICHALS…DSPYGHDAFL (310 aa)) folds into the AB hydrolase-1 domain. Ser-157 functions as the Nucleophile in the catalytic mechanism. Arg-227 is a binding site for substrate. Active-site residues include Asp-323 and His-356. Asp-357 contributes to the substrate binding site.

This sequence belongs to the AB hydrolase superfamily. MetX family. In terms of assembly, homodimer.

Its subcellular location is the cytoplasm. It catalyses the reaction L-homoserine + succinyl-CoA = O-succinyl-L-homoserine + CoA. It participates in amino-acid biosynthesis; L-methionine biosynthesis via de novo pathway; O-succinyl-L-homoserine from L-homoserine: step 1/1. Transfers a succinyl group from succinyl-CoA to L-homoserine, forming succinyl-L-homoserine. The sequence is that of Homoserine O-succinyltransferase from Pseudomonas putida (strain ATCC 700007 / DSM 6899 / JCM 31910 / BCRC 17059 / LMG 24140 / F1).